A 358-amino-acid chain; its full sequence is MRRVSGILAVAAFTISAFAGVIQPVAKDARDSAELDVKLTQVDGTVIKAVVTNNGDKDLNILNLNFFRDTAPVKKVSIYSQGVEVPFGGIRVRHKTSDLSSDVITYLAPGESFEDEFDVAITSDLSQGGPVVLQTQGYVPTTDTGGKTLSGVVRYKSNKLEIDVDGTTAAKSFAAMNQFVKIAKLSSCEGSQGDDTRRALRDCASLSTLAAAQAWAGGPKMLEYFKANDDATRKLVADRFTAVALESSNLTGGSTTYYCRDPYNICTNNIIAYTIPAENLISNCPIYYTEFDNVNRKCHGQDRVTTSLHEFTHASSVFSPGTKDIAYGYNACILLSTRDALNNADTFALFAQSINAGC.

The signal sequence occupies residues 1-19 (MRRVSGILAVAAFTISAFA). Positions 20 to 185 (GVIQPVAKDA…MNQFVKIAKL (166 aa)) are excised as a propeptide. Intrachain disulfides connect Cys-188/Cys-259 and Cys-266/Cys-284. A glycan (N-linked (GlcNAc...) asparagine) is linked at Asn-249. Residue His-309 participates in Zn(2+) binding. Glu-310 is a catalytic residue. Zn(2+)-binding residues include His-313 and Asp-324.

The protein belongs to the peptidase M35 family. It depends on Zn(2+) as a cofactor.

The protein localises to the secreted. It carries out the reaction Preferential cleavage of bonds with hydrophobic residues in P1'. Also 3-Asn-|-Gln-4 and 8-Gly-|-Ser-9 bonds in insulin B chain.. Functionally, secreted metalloproteinase that allows assimilation of proteinaceous substrates. Shows high activities on basic nuclear substrates such as histone and protamine. This chain is Neutral protease 2 homolog PADG_00776, found in Paracoccidioides brasiliensis (strain Pb18).